The primary structure comprises 128 residues: 3-aminoacrylate deaminase RutC (128 aa).

Belongs to the RutC family. Homotrimer.

It carries out the reaction (Z)-3-aminoacrylate + H2O + H(+) = 3-oxopropanoate + NH4(+). Involved in pyrimidine catabolism. Catalyzes the deamination of 3-aminoacrylate to malonic semialdehyde, a reaction that can also occur spontaneously. RutC may facilitate the reaction and modulate the metabolic fitness, rather than catalyzing essential functions. This Escherichia coli (strain SE11) protein is 3-aminoacrylate deaminase RutC.